The sequence spans 357 residues: Malonyl CoA reductase (NADP) (357 aa).

13–16 (TGLV) is an NADP(+) binding site. The Acyl-thioester intermediate role is filled by cysteine 150. 180-181 (SG) lines the NADP(+) pocket. The active-site Proton acceptor is the histidine 245. Residue 332-333 (NT) participates in NADP(+) binding.

It belongs to the aspartate-semialdehyde dehydrogenase family. As to quaternary structure, homotetramer.

The catalysed reaction is 3-oxopropanoate + NADP(+) + CoA = malonyl-CoA + NADPH + H(+). Catalyzes the reduction of malonyl-CoA to malonate semialdehyde, a key step in the 3-hydroxypropanoate and the 3-hydroxypropanoate/4-hydroxybutyrate cycles. The protein is Malonyl CoA reductase (NADP) of Metallosphaera sedula (strain ATCC 51363 / DSM 5348 / JCM 9185 / NBRC 15509 / TH2).